The chain runs to 295 residues: Glycine N-methyltransferase (295 aa).

Residue Val-2 is modified to N-acetylvaline. (6S)-5-methyl-5,6,7,8-tetrahydrofolate-binding residues include Ser-4 and Tyr-6. Residue Ser-10 is modified to Phosphoserine. Residues Tyr-22, Trp-31, Tyr-34, and Arg-41 each coordinate S-adenosyl-L-methionine. Position 34 is a phosphotyrosine (Tyr-34). Lys-46 carries the N6-succinyllysine modification. Residues Ala-65, 86 to 88, 117 to 118, 139 to 142, and Arg-178 contribute to the S-adenosyl-L-methionine site; these read DAS, NW, and LGNS. An N6-succinyllysine mark is found at Lys-193, Lys-198, and Lys-203. His-217 contributes to the (6S)-5-methyl-5,6,7,8-tetrahydrofolate binding site. Tyr-223 lines the S-adenosyl-L-methionine pocket. Arg-242 provides a ligand contact to (6S)-5-methyl-5,6,7,8-tetrahydrofolate.

It belongs to the class I-like SAM-binding methyltransferase superfamily. Glycine N-methyltransferase family. As to quaternary structure, homotetramer. In terms of tissue distribution, expressed only in liver, pancreas, and prostate.

It is found in the cytoplasm. It catalyses the reaction glycine + S-adenosyl-L-methionine = sarcosine + S-adenosyl-L-homocysteine + H(+). With respect to regulation, inhibited by 5-methyltetrahydrofolate monoglutamate and by 5-methyltetrahydrofolate pentaglutamate, inhibition is much more effective by the pentaglutamate form than by the monoglutamate form. Two molecules of 5-methyltetrahydrofolate are bound per tetramer. The binding sites are localized between subunits. Inhibitor binding may preclude movements of the polypeptide chain that are necessary for enzyme activity. Its function is as follows. Catalyzes the methylation of glycine by using S-adenosylmethionine (AdoMet) to form N-methylglycine (sarcosine) with the concomitant production of S-adenosylhomocysteine (AdoHcy), a reaction regulated by the binding of 5-methyltetrahydrofolate. Plays an important role in the regulation of methyl group metabolism by regulating the ratio between S-adenosyl-L-methionine and S-adenosyl-L-homocysteine. The chain is Glycine N-methyltransferase from Homo sapiens (Human).